The primary structure comprises 185 residues: Peptidyl-tRNA hydrolase (185 aa).

Residue Tyr14 participates in tRNA binding. His19 functions as the Proton acceptor in the catalytic mechanism. Residues Tyr65, Asn67, and Asn113 each contribute to the tRNA site.

It belongs to the PTH family. As to quaternary structure, monomer.

It is found in the cytoplasm. It carries out the reaction an N-acyl-L-alpha-aminoacyl-tRNA + H2O = an N-acyl-L-amino acid + a tRNA + H(+). In terms of biological role, hydrolyzes ribosome-free peptidyl-tRNAs (with 1 or more amino acids incorporated), which drop off the ribosome during protein synthesis, or as a result of ribosome stalling. Catalyzes the release of premature peptidyl moieties from peptidyl-tRNA molecules trapped in stalled 50S ribosomal subunits, and thus maintains levels of free tRNAs and 50S ribosomes. In Rickettsia bellii (strain RML369-C), this protein is Peptidyl-tRNA hydrolase.